Reading from the N-terminus, the 88-residue chain is Acyl-CoA-binding domain-containing protein 7 (88 aa).

Residues 3 to 88 (LQADFDKAAK…AKELIEKYGI (86 aa)) form the ACB domain. Residues Arg15, 30-34 (YGLYK), Lys56, and Tyr75 each bind an acyl-CoA.

It belongs to the ACBD7 family.

In terms of biological role, binds medium- and long-chain acyl-CoA esters. This chain is Acyl-CoA-binding domain-containing protein 7 (ACBD7), found in Bos taurus (Bovine).